The following is a 366-amino-acid chain: MGKTDKVVVGLSGGVDSAVAAMRLLEAGHHVEGLFMKNWEDDDTLTHCAAEEDLAEAQAVADHLGIRLHRANFAARYREQVFEVCLREYRAGRTPNPDILCNQRIKFRAFLDHALSLGASKVATGHYAGVGEQGGRFTLLRGEDPHKDQSYFLYTLGQAQLRHSLFPLSELPKPEVRRQAAAAGLPNHARRDSTGICFIGERDFRAFLSRYIQRSPGPMETPEGQVVGEHQGLAFYTLGQRRGLGLGGLPDHDEGAWYVADKDMARNALIVVQGHAHPRLLSTALVADELSWVAGAPPTLPLRCTVKSRYRQQDQPCALEAGPSPTSVVVRFDTPQRAVTPGQSVVFYQGRVCLGGGIIQTRTPVE.

ATP is bound by residues 10–17 (GLSGGVDS) and Met36. The segment at 96–98 (NPD) is interaction with target base in tRNA. Cys101 (nucleophile) is an active-site residue. A disulfide bridge connects residues Cys101 and Cys197. Gly125 is an ATP binding site. An interaction with tRNA region spans residues 147-149 (KDQ). Catalysis depends on Cys197, which acts as the Cysteine persulfide intermediate. Positions 309 to 310 (RY) are interaction with tRNA.

Belongs to the MnmA/TRMU family.

It localises to the cytoplasm. It catalyses the reaction S-sulfanyl-L-cysteinyl-[protein] + uridine(34) in tRNA + AH2 + ATP = 2-thiouridine(34) in tRNA + L-cysteinyl-[protein] + A + AMP + diphosphate + H(+). In terms of biological role, catalyzes the 2-thiolation of uridine at the wobble position (U34) of tRNA, leading to the formation of s(2)U34. This chain is tRNA-specific 2-thiouridylase MnmA, found in Alkalilimnicola ehrlichii (strain ATCC BAA-1101 / DSM 17681 / MLHE-1).